Consider the following 153-residue polypeptide: Transcriptional repressor NrdR 2 (153 aa).

A zinc finger lies at 3–34 (CPFCGQDDTQVKDSRPTDDNAAIRRRRACPGC). Residues 49 to 139 (LVVVKKDGSR…VYRNFREAKD (91 aa)) enclose the ATP-cone domain.

This sequence belongs to the NrdR family. Zn(2+) is required as a cofactor.

Functionally, negatively regulates transcription of bacterial ribonucleotide reductase nrd genes and operons by binding to NrdR-boxes. The protein is Transcriptional repressor NrdR 2 of Paramagnetospirillum magneticum (strain ATCC 700264 / AMB-1) (Magnetospirillum magneticum).